Consider the following 432-residue polypeptide: Putative D-alanyl-D-alanine carboxypeptidase (432 aa).

A helical; Signal-anchor transmembrane segment spans residues 7–25 (ATVLLTFSLSAFAVEYPVL).

This sequence belongs to the peptidase S12 family. YfeW subfamily.

The protein resides in the cell inner membrane. The catalysed reaction is Preferential cleavage: (Ac)2-L-Lys-D-Ala-|-D-Ala. Also transpeptidation of peptidyl-alanyl moieties that are N-acyl substituents of D-alanine.. The chain is Putative D-alanyl-D-alanine carboxypeptidase from Salmonella heidelberg (strain SL476).